The following is a 180-amino-acid chain: MGAFHATTIFAIRHNGASAMAGDGQVTFGNAVVMKHTAKKVRRLFQGNVLAGFAGSVADAFTLFEMFEGKLEQWNGNLPRAAVELAKEWRSDKVLRRLEAMLIVMDKQHLLLVSGTGEVIEPDDGMLAIGSGGQYALAAGRALKKYAGGSMTAKEIAKAALEIAADICVYTNGHIIVEEL.

Residue threonine 7 is part of the active site. Na(+) is bound by residues alanine 165, cysteine 168, and threonine 171.

Belongs to the peptidase T1B family. HslV subfamily. In terms of assembly, a double ring-shaped homohexamer of HslV is capped on each side by a ring-shaped HslU homohexamer. The assembly of the HslU/HslV complex is dependent on binding of ATP.

The protein localises to the cytoplasm. The enzyme catalyses ATP-dependent cleavage of peptide bonds with broad specificity.. Allosterically activated by HslU binding. Its function is as follows. Protease subunit of a proteasome-like degradation complex believed to be a general protein degrading machinery. This chain is ATP-dependent protease subunit HslV, found in Geobacillus kaustophilus (strain HTA426).